Here is a 527-residue protein sequence, read N- to C-terminus: Formate--tetrahydrofolate ligase (527 aa).

T53–T60 contributes to the ATP binding site.

It belongs to the formate--tetrahydrofolate ligase family.

The enzyme catalyses (6S)-5,6,7,8-tetrahydrofolate + formate + ATP = (6R)-10-formyltetrahydrofolate + ADP + phosphate. Its pathway is one-carbon metabolism; tetrahydrofolate interconversion. In Acholeplasma laidlawii (strain PG-8A), this protein is Formate--tetrahydrofolate ligase.